The chain runs to 225 residues: ATP synthase subunit a (225 aa).

The next 5 membrane-spanning stretches (helical) occupy residues 16 to 36 (LFVYAFHFCLVAIIVVLVAKL), 79 to 99 (LVATIGFVVFFSNAIGIIPGF), 105 to 125 (SLNLTLTLALIVFFYYHFEGI), 176 to 196 (LFLLVMLTLAPWFAPLPAYAL), and 202 to 222 (VLQTFIFMMLTYVYLAGAVAI).

This sequence belongs to the ATPase A chain family. F-type ATPases have 2 components, CF(1) - the catalytic core - and CF(0) - the membrane proton channel. CF(1) has five subunits: alpha(3), beta(3), gamma(1), delta(1), epsilon(1). CF(0) has three main subunits: a(1), b(2) and c(9-12). The alpha and beta chains form an alternating ring which encloses part of the gamma chain. CF(1) is attached to CF(0) by a central stalk formed by the gamma and epsilon chains, while a peripheral stalk is formed by the delta and b chains.

It is found in the cell inner membrane. In terms of biological role, key component of the proton channel; it plays a direct role in the translocation of protons across the membrane. The protein is ATP synthase subunit a of Campylobacter curvus (strain 525.92).